The primary structure comprises 908 residues: Protein translocase subunit SecA (908 aa).

Residues Gln-90, Gly-108–Thr-112, and Asp-503 contribute to the ATP site. Low complexity predominate over residues Ala-846–Pro-864. The segment at Ala-846–Gly-884 is disordered. Residues Cys-892, Cys-894, Cys-903, and His-904 each coordinate Zn(2+).

It belongs to the SecA family. Monomer and homodimer. Part of the essential Sec protein translocation apparatus which comprises SecA, SecYEG and auxiliary proteins SecDF-YajC and YidC. The cofactor is Zn(2+).

The protein resides in the cell inner membrane. It is found in the cytoplasm. It catalyses the reaction ATP + H2O + cellular proteinSide 1 = ADP + phosphate + cellular proteinSide 2.. Part of the Sec protein translocase complex. Interacts with the SecYEG preprotein conducting channel. Has a central role in coupling the hydrolysis of ATP to the transfer of proteins into and across the cell membrane, serving both as a receptor for the preprotein-SecB complex and as an ATP-driven molecular motor driving the stepwise translocation of polypeptide chains across the membrane. In Cereibacter sphaeroides (strain ATCC 17029 / ATH 2.4.9) (Rhodobacter sphaeroides), this protein is Protein translocase subunit SecA.